We begin with the raw amino-acid sequence, 448 residues long: Maintenance of mitochondrial morphology protein 1 (448 aa).

The Lumenal portion of the chain corresponds to Met-1–Gly-74. A helical transmembrane segment spans residues Leu-75–Phe-95. The Cytoplasmic segment spans residues Ala-96–Ile-448. Disordered regions lie at residues Arg-119 to Pro-144 and Leu-303 to Asp-357. The span at Ser-127–Asp-140 shows a compositional bias: basic and acidic residues. Positions Ser-164–Pro-419 constitute an SMP-LTD domain. Residues Pro-313–Ser-332 show a composition bias toward low complexity. Residues Glu-345–Glu-356 are compositionally biased toward basic and acidic residues.

The protein belongs to the MMM1 family. Homodimer. Component of the ER-mitochondria encounter structure (ERMES) or MDM complex, composed of MMM1, MDM10, MDM12 and MDM34. An MMM1 homodimer associates with one molecule of MDM12 on each side in a pairwise head-to-tail manner, and the SMP-LTD domains of MMM1 and MDM12 generate a continuous hydrophobic tunnel for phospholipid trafficking.

Its subcellular location is the endoplasmic reticulum membrane. In terms of biological role, component of the ERMES/MDM complex, which serves as a molecular tether to connect the endoplasmic reticulum (ER) and mitochondria. Components of this complex are involved in the control of mitochondrial shape and protein biogenesis, and function in nonvesicular lipid trafficking between the ER and mitochondria. The MDM12-MMM1 subcomplex functions in the major beta-barrel assembly pathway that is responsible for biogenesis of all outer membrane beta-barrel proteins, and acts in a late step after the SAM complex. The MDM10-MDM12-MMM1 subcomplex further acts in the TOM40-specific pathway after the action of the MDM12-MMM1 complex. Essential for establishing and maintaining the structure of mitochondria and maintenance of mtDNA nucleoids. In Debaryomyces hansenii (strain ATCC 36239 / CBS 767 / BCRC 21394 / JCM 1990 / NBRC 0083 / IGC 2968) (Yeast), this protein is Maintenance of mitochondrial morphology protein 1.